The following is a 386-amino-acid chain: ATP synthase gamma chain 2, chloroplastic (386 aa).

The segment at 1-22 is disordered; it reads MTGSISTSWLLSSPSNSNSASS. The transit peptide at 1–60 directs the protein to the chloroplast; it reads MTGSISTSWLLSSPSNSNSASSSESYSFIATLKPVRYYPFQSLTPNRISSRSPLPSIQIR. The active site involves C149. C260 and C266 are oxidised to a cystine.

This sequence belongs to the ATPase gamma chain family. F-type ATPases have 2 components, CF(1) - the catalytic core - and CF(0) - the membrane proton channel. CF(1) has five subunits: alpha(3), beta(3), gamma(1), delta(1), epsilon(1). CF(0) has four main subunits: a, b, b' and c.

The protein resides in the plastid. Its subcellular location is the chloroplast thylakoid membrane. In terms of biological role, produces ATP from ADP in the presence of a proton gradient across the membrane. The gamma chain is believed to be important in regulating ATPase activity and the flow of protons through the CF(0) complex. The protein is ATP synthase gamma chain 2, chloroplastic (ATPC2) of Arabidopsis thaliana (Mouse-ear cress).